The sequence spans 610 residues: UvrABC system protein C (610 aa).

Residues serine 16 to valine 94 form the GIY-YIG domain. The region spanning aspartate 204–valine 239 is the UVR domain.

This sequence belongs to the UvrC family. As to quaternary structure, interacts with UvrB in an incision complex.

It localises to the cytoplasm. In terms of biological role, the UvrABC repair system catalyzes the recognition and processing of DNA lesions. UvrC both incises the 5' and 3' sides of the lesion. The N-terminal half is responsible for the 3' incision and the C-terminal half is responsible for the 5' incision. The chain is UvrABC system protein C from Salmonella dublin (strain CT_02021853).